Here is a 603-residue protein sequence, read N- to C-terminus: Nuclear receptor subfamily 2 group C member 1 (603 aa).

Positions 1-178 (MATIEEIAHQ…RLQRCIAFGM (178 aa)) are required for interaction with KAT2B. Residues 110–185 (FDLCVVCGDK…FGMKQDSVQC (76 aa)) constitute a DNA-binding region (nuclear receptor). 2 NR C4-type zinc fingers span residues 113-133 (CVVCGDKASGRHYGAVTCEGC) and 149-168 (CRGSKDCIINKHHRNRCQYC). S197 and S215 each carry phosphoserine. Residue T220 is modified to Phosphothreonine. T222 is modified (phosphothreonine; by MAPK1). K250 participates in a covalent cross-link: Glycyl lysine isopeptide (Lys-Gly) (interchain with G-Cter in SUMO); alternate. K250 participates in a covalent cross-link: Glycyl lysine isopeptide (Lys-Gly) (interchain with G-Cter in SUMO2); alternate. The NR LBD domain occupies 348-590 (GSVHLITGDS…SVIPHILKME (243 aa)). At S581 the chain carries Phosphoserine; by PKC. The interval 584–603 (PHILKMEPADYNSQIIGHSI) is required for interaction with NRIP1. K588 is covalently cross-linked (Glycyl lysine isopeptide (Lys-Gly) (interchain with G-Cter in SUMO2)).

This sequence belongs to the nuclear hormone receptor family. NR2 subfamily. In terms of assembly, homodimer. Heterodimer; binds DNA as a heterodimer with NR2C2 required for chromatin remodeling and for binding to promoter regions such as globin DR1 repeats. Interacts with ESR1; the interaction prevents homodimerization of ESR1 and suppresses its transcriptional activity and cell growth. Interacts with NRIP1 (via its LXXLL motifs); the interaction provides corepressor activity. Interacts with HDAC3 (via the DNA-binding domain). Interacts with HDAC4 (via the DNA-binding domain). Interacts with PIAS1; the interaction is required for sumoylation of NR2C1. Interacts with UBE2I; the interaction is required for sumoylation of NR2C1. Interacts with KAT2B; the interaction acts as a corepressor of gene expression. Post-translationally, sumoylation requires both PIAS1 and UBE2I. Sumoylation appears to dissociate NR2C1 from the PML nuclear bodies. Enhances the interaction with NRIP1 but inhibits interaction with KAT2B. In proliferating cells, stimulation by all-trans retinoic acid, activation of MAPK1-mediated phosphorylation and recruitment to PML bodies with subsequent sumoylation, suppresses OCT4 expression. In terms of processing, phosphorylated on several serine and threonine residues. Phosphorylation on Thr-220, stimulated by all-trans retinoic acid (atRA) mediates PML location and sumoylation in proliferating cells which then modulates its association with effector molecules, KAT2B and NRIP1. Phosphorylation on Ser-581 by PKC is important for protein stability and function as activator of RARB.

The protein resides in the nucleus. The protein localises to the PML body. Its function is as follows. Orphan nuclear receptor. Binds the IR7 element in the promoter of its own gene in an autoregulatory negative feedback mechanism. Primarily repressor of a broad range of genes. Binds to hormone response elements (HREs) consisting of two 5'-AGGTCA-3' half site direct repeat consensus sequences. Together with NR2C2, forms the core of the DRED (direct repeat erythroid-definitive) complex that represses embryonic and fetal globin transcription. Also activator of OCT4 gene expression. May be involved in stem cell proliferation and differentiation. Mediator of retinoic acid-regulated preadipocyte proliferation. In Macaca fascicularis (Crab-eating macaque), this protein is Nuclear receptor subfamily 2 group C member 1 (NR2C1).